The primary structure comprises 1406 residues: MKDLLNLFNQQRQTLDFDAIKIALASPDLIRSWSFGEVKKPETINYRTFKPERDGLFCAAIFGPVKDYECLCGKYKRMKHRGVVCEKCGTEVTLAKVRRERMGHIDLASPVAHIWFLKSLPSRIGLMLDMTLRDIERVLYFEAYVVTEPGLTALERRQLLTEEQYLQARQEHGDDFDAAMGAEAVYELLRTIDLQSEMTRLREEIAATGSETKLKRLTKRIKLIEAFLESGNRPEWMVMTVLPVLPPDLRPLVPLDGGRFATSDLNDLYRRVINRNNRLRRLLELSAPDIIVRNEKRMLQESVDALLDNGRRGRAITGTNKRPLKSLADMIKGKQGRFRQNLLGKRVDYSGRSVIVVGPYLRLHQCGLPKKMALELFKPFVFAKLQRRGLATTIKAAKKLVEREEAEVWDILEEVIREHPVMLNRAPTLHRLGIQAFEPVLIEGKAIQLHPLVCTAFNADFDGDQMAVHVPLSLEAQLEARALMMSTNNILSPANGEPIIVPSQDVVLGLYYMTRSLENKKGEGMAFANIAEVKRAYDNRVVELHARVKVRITEVVTDEDGNKQNKTSIVDTTIGRALLAEILPEGLPFALANTELTKKNISRLINSSYRQLGLKDTVVFADKLMYTGFAYATRAGVSIGIDDMLIPDEKKGILTEAEAEVLEIQEQYQSGLVTAGERYNKVVDIWSRTNERIAKAMMDTIGTEKVVNAKGETIDQKSMNSLYIMADSGARGSQAQIRQLAGMRGLMARPDGSIIETPIKANFREGLNVQEYFNSTHGARKGLADTALKTANSGYLTRRLVDVAQDVVITEVDCGTTEGLIMTPIVEGGDVVEPLKDRVLGRVVAEDVFLPGNDEDPIVTRNTLLDEAWVAKLEDAGVQTIKVRSTISCESAFGVCSRCYGRDLARGHLVNIGEAVGVIAAQSIGEPGTQLTMRTFHIGGAASRAAAVDNITVKTTGSVKFSNLKSVEHANGSLVAVSRSGEISVLDAHGRERERYKLPYGATITSKDGDAIKAGQTVANWDPHNHPIVSEVAGFIRFIDFVDGITVIEKTDELTGLASREITDPKRRGTQAKDLRPIVRIVDAKGNDLSIPGTDLPAQYLLPPRSIVNLQDGAAVGVGDVVAKIPQEASKTRDITGGLPRVADLFEARKPKDPAVLAERSGIISFGKDTKGKQRLIIKDTDGSEHEELIPKYRQVIVFEGEHVTKGETIVDGEPSPQDILRLLGVEPLAAYLVKEIQDVYRLQGVKINDKHIEVITRQMLRKVEITDQGSSKFLNGEQVERQRVIEENARLAARNELPAHFDPVLLGITKASLATESFISAASFQETTRVLTEAAVRGTSDNLRGLKENVIVGRLIPAGTGLAYHSNRRRGASGLTESEMQTLAGTPAAVEAPVVEAEAEQASED.

Zn(2+) is bound by residues cysteine 70, cysteine 72, cysteine 85, and cysteine 88. 3 residues coordinate Mg(2+): aspartate 460, aspartate 462, and aspartate 464. Positions 814, 889, 896, and 899 each coordinate Zn(2+).

Belongs to the RNA polymerase beta' chain family. As to quaternary structure, the RNAP catalytic core consists of 2 alpha, 1 beta, 1 beta' and 1 omega subunit. When a sigma factor is associated with the core the holoenzyme is formed, which can initiate transcription. Mg(2+) serves as cofactor. The cofactor is Zn(2+).

It catalyses the reaction RNA(n) + a ribonucleoside 5'-triphosphate = RNA(n+1) + diphosphate. Functionally, DNA-dependent RNA polymerase catalyzes the transcription of DNA into RNA using the four ribonucleoside triphosphates as substrates. This Stenotrophomonas maltophilia (strain K279a) protein is DNA-directed RNA polymerase subunit beta'.